A 470-amino-acid chain; its full sequence is Rhamnulokinase (470 aa).

12–16 (ASSGR) provides a ligand contact to ATP. Residues alanine 80 and 237–239 (HDT) each bind substrate. The Proton acceptor role is filled by aspartate 238. Threonine 259 is a binding site for ATP. Substrate is bound at residue asparagine 296. Glutamine 304 lines the ATP pocket. Cysteine 353 and cysteine 370 are disulfide-bonded. Glycine 402 is a binding site for ATP.

The protein belongs to the rhamnulokinase family. Requires Mg(2+) as cofactor.

The catalysed reaction is L-rhamnulose + ATP = L-rhamnulose 1-phosphate + ADP + H(+). It participates in carbohydrate degradation; L-rhamnose degradation; glycerone phosphate from L-rhamnose: step 2/3. In terms of biological role, involved in the catabolism of L-rhamnose (6-deoxy-L-mannose). Catalyzes the transfer of the gamma-phosphate group from ATP to the 1-hydroxyl group of L-rhamnulose to yield L-rhamnulose 1-phosphate. The protein is Rhamnulokinase of Oceanobacillus iheyensis (strain DSM 14371 / CIP 107618 / JCM 11309 / KCTC 3954 / HTE831).